A 1706-amino-acid polypeptide reads, in one-letter code: DDT domain-containing protein PTM (1706 aa).

The segment covering M1 to Q16 has biased composition (basic residues). Disordered stretches follow at residues M1–N27 and V144–D168. A Nuclear localization signal motif is present at residues R9–L18. Positions E148–E160 are enriched in acidic residues. A DDT domain is found at E192 to R252. The span at Y375–S393 shows a compositional bias: basic and acidic residues. The segment at Y375–D408 is disordered. A compositionally biased stretch (polar residues) spans R394 to D408. The PHD-type 1 zinc finger occupies S411–N458. Disordered regions lie at residues K1165 to K1194 and T1311 to P1345. Polar residues-rich tracts occupy residues P1167 to K1194 and T1311 to D1323. The segment covering D1325–K1336 has biased composition (basic and acidic residues). 5 helical membrane passes run A1539 to P1559, L1569 to L1589, A1596 to I1616, A1624 to L1644, and M1682 to I1702.

As to quaternary structure, interacts (via the DDT domain) with CHR11 (via C-terminus).

Its subcellular location is the plastid. It localises to the chloroplast outer membrane. It is found in the nucleus. Functionally, membrane-bound transcription factor required for the plastid-to-nucleus retrograde signaling. Functions in multiple retrograde pathways. The plastid-to-nucleus signal plays an important role in the coordinated expression of both nuclear- and chloroplast-localized genes that encode photosynthesis-related proteins. In the nucleus, activates ABI4 transcription in a PHD-dependent manner associated with histone modifications. Localized primarily in the chloroplast outer membrane as dormant form and, in response to retrograde signals, is released from the membrane through proteolytic cleavage and its cleaved fragment containing the transcription factor domain is redistributed to the nucleus, where it regulates the expression of particular nuclear genes. The sequence is that of DDT domain-containing protein PTM from Arabidopsis thaliana (Mouse-ear cress).